A 312-amino-acid chain; its full sequence is Acetaldehyde dehydrogenase (312 aa).

Position 12 to 15 (12 to 15 (SGNV)) interacts with NAD(+). The Acyl-thioester intermediate role is filled by Cys-132. NAD(+) contacts are provided by residues 163 to 171 (SAGPGTRAN) and Asn-290.

Belongs to the acetaldehyde dehydrogenase family.

It catalyses the reaction acetaldehyde + NAD(+) + CoA = acetyl-CoA + NADH + H(+). The polypeptide is Acetaldehyde dehydrogenase (cbzQ) (Pseudomonas putida (Arthrobacter siderocapsulatus)).